The chain runs to 158 residues: Transcription factor bHLH146 (158 aa).

A compositionally biased stretch (low complexity) spans 77–90; it reads SSSSNPTTTTSSSS. A disordered region spans residues 77–110; the sequence is SSSSNPTTTTSSSSDGIRILERPDKEGGNEEGGI. The segment covering 94–110 has biased composition (basic and acidic residues); the sequence is RILERPDKEGGNEEGGI. The region spanning 94–143 is the bHLH; atypical domain; the sequence is RILERPDKEGGNEEGGIEERLRELKKLLPGGEEMNVEEMLSEIGNYIKCL.

This sequence belongs to the bHLH protein family.

Its subcellular location is the nucleus. This is Transcription factor bHLH146 (BHLH146) from Arabidopsis thaliana (Mouse-ear cress).